The primary structure comprises 210 residues: Riboflavin kinase (210 aa).

The tract at residues Met1–Ser81 is H-T-H motif-like. Residues Ile82–Leu210 are riboflavin kinase. A CDP-binding site is contributed by Gly91–Ala96. Residues Thr120 and Asn122 each coordinate Mg(2+). FMN-binding residues include Thr177 and Glu185. Val190–Arg193 is a CDP binding site.

It belongs to the archaeal riboflavin kinase family. Mg(2+) serves as cofactor.

It catalyses the reaction riboflavin + CTP = CDP + FMN + H(+). It functions in the pathway cofactor biosynthesis; FMN biosynthesis; FMN from riboflavin (CTP route): step 1/1. Its function is as follows. Catalyzes the CTP-dependent phosphorylation of riboflavin (vitamin B2) to form flavin mononucleotide (FMN). In Pyrobaculum aerophilum (strain ATCC 51768 / DSM 7523 / JCM 9630 / CIP 104966 / NBRC 100827 / IM2), this protein is Riboflavin kinase (ribK).